The primary structure comprises 417 residues: Carbohydrate sulfotransferase 8 (417 aa).

Residues 1–10 (MTPRLGTMRL) are Cytoplasmic-facing. The chain crosses the membrane as a helical; Signal-anchor for type II membrane protein span at residues 11 to 31 (ACMFSSILLFGAAGLLLFISL). Topologically, residues 32–417 (QDPIELSPQQ…NYSKPFSDLY (386 aa)) are lumenal. Residues 47 to 101 (FSIRPQQPQHDSHLRISTEKGTRDSPSGSPRGLQLQAPDQPRPHPKAAGSPLRLR) are disordered. Residues 56 to 69 (HDSHLRISTEKGTR) are compositionally biased toward basic and acidic residues. N-linked (GlcNAc...) asparagine glycans are attached at residues N121 and N122. 3'-phosphoadenylyl sulfate is bound by residues 191–197 (PKAGCSN) and 251–259 (REPFERLVS). N287, N360, and N408 each carry an N-linked (GlcNAc...) asparagine glycan.

Belongs to the sulfotransferase 2 family. Strongly expressed in brain. Weakly expressed in lung and kidney. Weakly expressed in pituitary.

It is found in the golgi apparatus membrane. In terms of biological role, catalyzes the transfer of sulfate to position 4 of non-reducing N-acetylgalactosamine (GalNAc) residues in both N-glycans and O-glycans. Required for biosynthesis of glycoprotein hormones lutropin and thyrotropin, by mediating sulfation of their carbohydrate structures. Only active against terminal GalNAcbeta1,GalNAcbeta. Not active toward chondroitin. The polypeptide is Carbohydrate sulfotransferase 8 (Chst8) (Mus musculus (Mouse)).